A 178-amino-acid polypeptide reads, in one-letter code: Large ribosomal subunit protein uL6 (178 aa).

The protein belongs to the universal ribosomal protein uL6 family. As to quaternary structure, part of the 50S ribosomal subunit.

This protein binds to the 23S rRNA, and is important in its secondary structure. It is located near the subunit interface in the base of the L7/L12 stalk, and near the tRNA binding site of the peptidyltransferase center. In Corynebacterium aurimucosum (strain ATCC 700975 / DSM 44827 / CIP 107346 / CN-1) (Corynebacterium nigricans), this protein is Large ribosomal subunit protein uL6.